We begin with the raw amino-acid sequence, 143 residues long: Small ribosomal subunit protein bS6 (143 aa).

Residues 100–143 (QSFIMKSKDDKGDKPERRRRDDDESGDVGVSNDSDNDGGNAEAA) are disordered. The span at 105 to 121 (KSKDDKGDKPERRRRDD) shows a compositional bias: basic and acidic residues. Residues 126 to 143 (DVGVSNDSDNDGGNAEAA) show a composition bias toward low complexity.

This sequence belongs to the bacterial ribosomal protein bS6 family.

Binds together with bS18 to 16S ribosomal RNA. This chain is Small ribosomal subunit protein bS6, found in Xylella fastidiosa (strain M12).